The following is a 319-amino-acid chain: 3'-5' exoribonuclease YhaM (319 aa).

A DNA-binding region (OB) is located at residues 12–90 (EAVDGYLLIK…QLKIASIRPT (79 aa)). Residues 163–279 (HVVSMLRIGK…LHLIDNIDAK (117 aa)) form the HD domain.

The protein belongs to the YhaM family.

In terms of biological role, shows a 3'-5' exoribonuclease activity. The chain is 3'-5' exoribonuclease YhaM from Shouchella clausii (strain KSM-K16) (Alkalihalobacillus clausii).